Reading from the N-terminus, the 357-residue chain is tRNA-specific 2-thiouridylase MnmA (357 aa).

ATP is bound by residues 6–13 (AMSGGVDS) and Leu32. The active-site Nucleophile is Cys101. Cys101 and Cys193 are joined by a disulfide. Gly125 lines the ATP pocket. Residues 143 to 145 (KDQ) form an interaction with tRNA region. The Cysteine persulfide intermediate role is filled by Cys193.

The protein belongs to the MnmA/TRMU family.

Its subcellular location is the cytoplasm. The enzyme catalyses S-sulfanyl-L-cysteinyl-[protein] + uridine(34) in tRNA + AH2 + ATP = 2-thiouridine(34) in tRNA + L-cysteinyl-[protein] + A + AMP + diphosphate + H(+). Its function is as follows. Catalyzes the 2-thiolation of uridine at the wobble position (U34) of tRNA, leading to the formation of s(2)U34. The protein is tRNA-specific 2-thiouridylase MnmA of Mycolicibacterium gilvum (strain PYR-GCK) (Mycobacterium gilvum (strain PYR-GCK)).